An 82-amino-acid chain; its full sequence is Defensin-like protein 22 (82 aa).

A signal peptide spans 1 to 24 (MAGLKVFSFALLLILTFSLIDVEG). Disulfide bonds link Cys34-Cys82, Cys44-Cys69, Cys53-Cys78, and Cys57-Cys80.

Belongs to the DEFL family.

The protein localises to the secreted. This Arabidopsis thaliana (Mouse-ear cress) protein is Defensin-like protein 22.